The following is a 467-amino-acid chain: 55 kDa erythrocyte membrane protein (467 aa).

The region spanning 73 to 154 is the PDZ domain; it reads EVAFEKNQSE…VVTMKIIPRP (82 aa). Positions 160–230 constitute an SH3 domain; that stretch reads PCEMYMRGQF…PSPELQEWRA (71 aa). The Guanylate kinase-like domain occupies 283–452; it reads RKTLVLIGAP…SVKIVEEALE (170 aa).

It belongs to the MAGUK family. Extensively palmitoylated.

The protein localises to the membrane. May play a role in the regulation of neutrophil polarization. This is 55 kDa erythrocyte membrane protein (mpp1) from Takifugu rubripes (Japanese pufferfish).